A 159-amino-acid chain; its full sequence is 17 kDa surface antigen (159 aa).

The signal sequence occupies residues 1–19 (MKLLSKIMIIALATSMLQA). A lipid anchor (N-palmitoyl cysteine) is attached at Cys20. Cys20 carries the S-diacylglycerol cysteine lipid modification.

This sequence belongs to the rickettsiale 17 kDa surface antigen family.

The protein resides in the cell outer membrane. The sequence is that of 17 kDa surface antigen (omp) from Rickettsia conorii (strain ATCC VR-613 / Malish 7).